Here is a 193-residue protein sequence, read N- to C-terminus: Ion-translocating oxidoreductase complex subunit B (193 aa).

The tract at residues 1-23 (MTFLFIVITLLALIFGAILGFAS) is hydrophobic. The region spanning 29-87 (EADPVVEKIDAILPQSQCGQCGYPGCKPYAEAICNGDEITKCIPGGQTTIVKIAEILGV) is the 4Fe-4S domain. Residues Cys46, Cys49, Cys54, Cys70, Cys110, Cys113, Cys116, Cys120, Cys140, Cys143, Cys146, and Cys150 each coordinate [4Fe-4S] cluster. 4Fe-4S ferredoxin-type domains follow at residues 101 to 130 (KVAF…GTNK) and 131 to 160 (AMHT…MIPV).

Belongs to the 4Fe4S bacterial-type ferredoxin family. RnfB subfamily. As to quaternary structure, the complex is composed of six subunits: RnfA, RnfB, RnfC, RnfD, RnfE and RnfG. Requires [4Fe-4S] cluster as cofactor.

The protein localises to the cell inner membrane. In terms of biological role, part of a membrane-bound complex that couples electron transfer with translocation of ions across the membrane. The sequence is that of Ion-translocating oxidoreductase complex subunit B from Haemophilus influenzae (strain 86-028NP).